The primary structure comprises 481 residues: NADH-quinone oxidoreductase subunit N (481 aa).

14 helical membrane passes run 11–31, 38–58, 74–94, 103–123, 128–148, 163–183, 208–228, 241–261, 272–292, 300–322, 332–352, 368–388, 404–424, and 450–470; these read ALPE…DLWA, WTHY…LAVW, GMSR…FVYA, IFKG…SVMV, FLTA…LIAL, FVLG…VYGA, LGLV…PFHM, VTAL…FRIL, WSLM…LAAI, MLAY…GAVG, TYAL…DGDN, VWLA…PPLM, GYVW…FYYL, and SLLS…QTVI.

It belongs to the complex I subunit 2 family. NDH-1 is composed of 14 different subunits. Subunits NuoA, H, J, K, L, M, N constitute the membrane sector of the complex.

Its subcellular location is the cell inner membrane. The catalysed reaction is a quinone + NADH + 5 H(+)(in) = a quinol + NAD(+) + 4 H(+)(out). Its function is as follows. NDH-1 shuttles electrons from NADH, via FMN and iron-sulfur (Fe-S) centers, to quinones in the respiratory chain. The immediate electron acceptor for the enzyme in this species is believed to be ubiquinone. Couples the redox reaction to proton translocation (for every two electrons transferred, four hydrogen ions are translocated across the cytoplasmic membrane), and thus conserves the redox energy in a proton gradient. The chain is NADH-quinone oxidoreductase subunit N from Neisseria gonorrhoeae (strain ATCC 700825 / FA 1090).